Consider the following 467-residue polypeptide: Prenyltransferase GME11375 (467 aa).

Glu93 is a binding site for L-tryptophan. Arg108, Lys196, Tyr198, Lys266, Tyr268, and Tyr436 together coordinate dimethylallyl diphosphate.

It belongs to the tryptophan dimethylallyltransferase family.

It functions in the pathway secondary metabolite biosynthesis. Its function is as follows. Prenyltransferase; part of the gene cluster that mediates the biosynthesis of dibenzodioxocinones such as pestalotiollide B, a novel class of inhibitors against cholesterol ester transfer protein (CEPT). The biosynthesis initiates from condensation of acetate and malonate units catalyzed by the non-reducing PKS pks8/GME11356. Pks8/GME11356 lacks a thioesterase (TE) domain, which is important to the cyclizing of the third ring of atrochrysone carboxylic acid, and the esterase GME11355 might play the role of TE and catalyzes the cyclization reaction of the C ring. The lactamase-like protein GME11357 (or other beta-lactamases in Pestalotiopsis microspora) probably hydrolyzes the thioester bond between the ACP of pks8/GME11356 and the intermediate to release atrochrysone carboxylic acid, which is spontaneously dehydrates to form endocrocin anthrone. Endocrocin anthrone is further converted to emodin via the endocrocin intermediate. Emodin is then oxidized by several enzymes such as the Baeyer-Villiger oxidase GME11358, the oxidoreductase GME11367, the short chain dehydrogenase/reductase GME11373, as well as by other oxidoreductases from the cluster, to modify the A and C rings and open the B ring, and finally yield monodictyphenone. The prenyltransferase GME11375 may catalyze the addition reaction between the C5 side chains and the carbon bone of dibenzodioxocinones. The remaining biochemical reactions to the final product dibenzodioxocinones should be methylation catalyzed by methyltransferase GME11366 and reduction and lactonization reaction catalyzed by a series of oxidordeuctases. The polypeptide is Prenyltransferase GME11375 (Pestalotiopsis microspora).